We begin with the raw amino-acid sequence, 206 residues long: Ribosomal RNA large subunit methyltransferase E (206 aa).

Positions 61, 63, 81, 97, and 122 each coordinate S-adenosyl-L-methionine. The Proton acceptor role is filled by Lys-162.

The protein belongs to the class I-like SAM-binding methyltransferase superfamily. RNA methyltransferase RlmE family.

It is found in the cytoplasm. It carries out the reaction uridine(2552) in 23S rRNA + S-adenosyl-L-methionine = 2'-O-methyluridine(2552) in 23S rRNA + S-adenosyl-L-homocysteine + H(+). Functionally, specifically methylates the uridine in position 2552 of 23S rRNA at the 2'-O position of the ribose in the fully assembled 50S ribosomal subunit. The polypeptide is Ribosomal RNA large subunit methyltransferase E (Neisseria gonorrhoeae (strain NCCP11945)).